A 1088-amino-acid chain; its full sequence is Serine/threonine-protein kinase LATS2 (1088 aa).

Residues 24–49 are disordered; that stretch reads EGLKQPSKSSVQGLPAGPNSDTSLDA. Ser-83 is modified (phosphoserine; by AURKA). Positions 98 to 139 constitute a UBA domain; that stretch reads EVNRQMLQELVNAGCDQEMAGRALKQTGSRSIEAALEYISKM. Residues 101–141 form an interaction with ubiquitinated AMOTL2 region; that stretch reads RQMLQELVNAGCDQEMAGRALKQTGSRSIEAALEYISKMGY. Over residues 271-280 the composition is skewed to polar residues; that stretch reads RSPSFQSKTP. The tract at residues 271-323 is disordered; it reads RSPSFQSKTPPETGGYASLPTKGQGGPPGAGLAFPPPAAGLYVPHPHHKQAGP. The residue at position 279 (Thr-279) is a Phosphothreonine. Phosphoserine is present on Ser-380. 2 disordered regions span residues 383 to 428 and 454 to 483; these read KPGL…SLPA and PQTA…AAEG. A compositionally biased stretch (polar residues) spans 404 to 413; sequence SRTNSFNSHQ. A compositionally biased stretch (pro residues) spans 466–478; it reads VPAPAPAPAPAPA. The PPxY motif motif lies at 515–518; that stretch reads PPPY. The tract at residues 543-592 is disordered; that stretch reads SLRAGPNEPEGGDKSRKSAKGDKGGKDKKQIQTSPVPVRKNSRDEEKRES. The span at 553–572 shows a compositional bias: basic and acidic residues; that stretch reads GGDKSRKSAKGDKGGKDKKQ. At Ser-576 the chain carries Phosphoserine. Over residues 583 to 592 the composition is skewed to basic and acidic residues; it reads NSRDEEKRES. The region spanning 668-973 is the Protein kinase domain; sequence FVKIKTLGIG…ADDLKAHPFF (306 aa). Residues 674–682 and Lys-697 each bind ATP; that span reads LGIGAFGEV. Asp-791 functions as the Proton acceptor in the catalytic mechanism. Residues 974–1052 enclose the AGC-kinase C-terminal domain; that stretch reads SAIDFSSDIR…RRFFDDNGYP (79 aa). The disordered stretch occupies residues 994 to 1022; that stretch reads SHPMDTSNFDPVDEESPWNDASEGSTKAW. Thr-1041 bears the Phosphothreonine mark. Residues 1056-1088 form a disordered region; it reads PKPSGAEASQAESSDLESSDLVDQTEGCQPVYV.

It belongs to the protein kinase superfamily. AGC Ser/Thr protein kinase family. In terms of assembly, interacts with and is phosphorylated by AURKA. Binds to AR. Interacts with AJUBA during mitosis and this complex regulates organization of the spindle apparatus through recruitment of gamma-tubulin to the centrosome. Interacts (via PPxY motif) with YAP1 (via WW domains). Interacts with MOB1A and MOB1B. Interacts with LIMD1, WTIP and AJUBA. Interacts with SNAI1. Interacts with WWC1, WWC2 and WWC3 (via their WW domains). Interacts (via UBA domain) with ubiquitinated AMOTL2; the interaction promotes LATS2 phosphorylation of YAP1. Mg(2+) is required as a cofactor. In terms of processing, autophosphorylated and phosphorylated during M-phase and the G1/S-phase of the cell cycle. Phosphorylated and activated by STK3/MST2. Phosphorylated by MAP4Ks; in parallel to STK3/MST2 and resulting to its activation. Phosphorylation by NUAK2 may regulate its activity in phosphorylation and inactivation YAP1. As to expression, expressed at high levels in heart and skeletal muscle and at lower levels in all other tissues examined.

The protein localises to the cytoplasm. It is found in the cytoskeleton. The protein resides in the microtubule organizing center. It localises to the centrosome. Its subcellular location is the spindle pole. The protein localises to the nucleus. The enzyme catalyses L-seryl-[protein] + ATP = O-phospho-L-seryl-[protein] + ADP + H(+). It catalyses the reaction L-threonyl-[protein] + ATP = O-phospho-L-threonyl-[protein] + ADP + H(+). Functionally, negative regulator of YAP1 in the Hippo signaling pathway that plays a pivotal role in organ size control and tumor suppression by restricting proliferation and promoting apoptosis. The core of this pathway is composed of a kinase cascade wherein STK3/MST2 and STK4/MST1, in complex with its regulatory protein SAV1, phosphorylates and activates LATS1/2 in complex with its regulatory protein MOB1, which in turn phosphorylates and inactivates YAP1 oncoprotein and WWTR1/TAZ. Phosphorylation of YAP1 by LATS2 inhibits its translocation into the nucleus to regulate cellular genes important for cell proliferation, cell death, and cell migration. Also phosphorylates YAP1 in response to cell contact inhibition-driven WWP1 ubiquitination of AMOTL2, which results in LATS2 activation. Acts as a tumor suppressor which plays a critical role in centrosome duplication, maintenance of mitotic fidelity and genomic stability. Negatively regulates G1/S transition by down-regulating cyclin E/CDK2 kinase activity. Negative regulator of the androgen receptor. Phosphorylates SNAI1 in the nucleus leading to its nuclear retention and stabilization, which enhances its epithelial-mesenchymal transition and tumor cell invasion/migration activities. This tumor-promoting activity is independent of its effects upon YAP1 or WWTR1/TAZ. Acts as an activator of the NLRP3 inflammasome by mediating phosphorylation of 'Ser-265' of NLRP3 following NLRP3 palmitoylation, promoting NLRP3 activation by NEK7. This chain is Serine/threonine-protein kinase LATS2, found in Homo sapiens (Human).